A 296-amino-acid chain; its full sequence is Polyamine aminopropyltransferase (296 aa).

The PABS domain occupies His-16–Lys-251. Position 46 (Gln-46) interacts with S-methyl-5'-thioadenosine. Residues His-77 and Asp-101 each coordinate spermidine. S-methyl-5'-thioadenosine contacts are provided by residues Glu-121 and Asn-152 to Gly-153. Catalysis depends on Asp-170, which acts as the Proton acceptor. Asp-170–Asp-173 lines the spermidine pocket.

Belongs to the spermidine/spermine synthase family. In terms of assembly, homotetramer.

Its subcellular location is the cytoplasm. It carries out the reaction S-adenosyl 3-(methylsulfanyl)propylamine + putrescine = S-methyl-5'-thioadenosine + spermidine + H(+). The protein operates within amine and polyamine biosynthesis; spermidine biosynthesis; spermidine from putrescine: step 1/1. Its activity is regulated as follows. Strongly inhibited by S-adenosyl-1,8-diamino-3-thiooctane. Its function is as follows. Catalyzes the irreversible transfer of a propylamine group from the amino donor S-adenosylmethioninamine (decarboxy-AdoMet) to putrescine (1,4-diaminobutane) to yield spermidine. It has lower affinity and lower activity towards 1,3-diaminopropane, cadaverine (1,5-diaminopentane), agmatine, norspermidine and spermidine (in vitro). The sequence is that of Polyamine aminopropyltransferase from Thermotoga maritima (strain ATCC 43589 / DSM 3109 / JCM 10099 / NBRC 100826 / MSB8).